Consider the following 73-residue polypeptide: Large ribosomal subunit protein uL29 (73 aa).

The protein belongs to the universal ribosomal protein uL29 family.

The protein is Large ribosomal subunit protein uL29 (rpmC) of Aquifex aeolicus (strain VF5).